The following is a 101-amino-acid chain: opdI (101 aa).

A helical transmembrane segment spans residues 30 to 49; it reads GGMGGALKIVFLGMMTYFIA. The tract at residues 56 to 101 is disordered; sequence SQHPPTDFNAPVQSVPQRAQRPSDTRLQGPVLLASNHPSGDSASPE. Polar residues-rich tracts occupy residues 66–81 and 91–101; these read PVQSVPQRAQRPSDTR and NHPSGDSASPE.

It is found in the membrane. Its function is as follows. Part of the gene cluster that mediates the biosynthesis of oxopyrrolidines, polyketide-amino acid hybrid compounds with feature structures of tetramic acid. Does not seem to play a role in oxopyrrolidines A and B biosynthesis. The polypeptide is opdI (Penicillium oxalicum (strain 114-2 / CGMCC 5302) (Penicillium decumbens)).